The sequence spans 246 residues: UPF0758 protein SSU98_1084 (246 aa).

The region spanning 103 to 225 (RILGSEKLGR…YYSFREESDV (123 aa)) is the MPN domain. Positions 174, 176, and 187 each coordinate Zn(2+). Residues 174 to 187 (HNHPSGSVQPSRND) carry the JAMM motif motif.

Belongs to the UPF0758 family.

This chain is UPF0758 protein SSU98_1084, found in Streptococcus suis (strain 98HAH33).